We begin with the raw amino-acid sequence, 142 residues long: Mitochondrial import receptor subunit TOM22 homolog (142 aa).

A compositionally biased stretch (low complexity) spans 1–11; the sequence is MAAAVAAAGAG. The disordered stretch occupies residues 1 to 42; the sequence is MAAAVAAAGAGEPQSPDELLPKGDAEKPEEELEEDDDEELDE. Residue Ala2 is modified to N-acetylalanine. Topologically, residues 2–83 are cytoplasmic; that stretch reads AAAVAAAGAG…AQKMYRFSRA (82 aa). Position 15 is a phosphoserine (Ser15). Residues 27-42 show a composition bias toward acidic residues; the sequence is KPEEELEEDDDEELDE. The interval 41-50 is import sequence; necessary for mitochondrion outer membrane localization and integration in the TOM complex; it reads DETLSERLWG. A Phosphothreonine modification is found at Thr43. The residue at position 45 (Ser45) is a Phosphoserine. Residues 83-103 form a TMD; necessary for mitochondrion outer membrane localization and integration in the TOM complex region; the sequence is AALWIGTTSFMILVLPVVFET. A helical transmembrane segment spans residues 84-103; sequence ALWIGTTSFMILVLPVVFET. At 104-142 the chain is on the mitochondrial intermembrane side; sequence EKLQMEQQQQLQQRQILLGPNTGLSGGMPGALPSLPGKI. Residues 123–142 are C-tail signal; necessary for mitochondrion outer membrane localization and integration in the TOM complex; it reads PNTGLSGGMPGALPSLPGKI.

It belongs to the Tom22 family. Forms part of the preprotein translocase complex of the outer mitochondrial membrane (TOM complex) which consists of at least 7 different proteins (TOMM5, TOMM6, TOMM7, TOMM20, TOMM22, TOMM40 and TOMM70). Interacts with TOMM40. Interacts with PPP2R2B. In terms of tissue distribution, ubiquitous.

It is found in the mitochondrion outer membrane. Its function is as follows. Central receptor component of the translocase of the outer membrane of mitochondria (TOM complex) responsible for the recognition and translocation of cytosolically synthesized mitochondrial preproteins. Together with the peripheral receptor TOM20 functions as the transit peptide receptor and facilitates the movement of preproteins into the translocation pore. Required for the translocation across the mitochondrial outer membrane of cytochrome P450 monooxygenases. The sequence is that of Mitochondrial import receptor subunit TOM22 homolog (TOMM22) from Homo sapiens (Human).